Consider the following 334-residue polypeptide: Holliday junction branch migration complex subunit RuvB (334 aa).

Positions 1 to 182 are large ATPase domain (RuvB-L); that stretch reads MDKRMVDQEF…FGVHLRLEYY (182 aa). ATP-binding positions include L21, R22, G63, K66, T67, T68, 129–131, R172, Y182, and R219; that span reads EDF. T67 is a binding site for Mg(2+). The tract at residues 183–253 is small ATPAse domain (RuvB-S); that stretch reads NENDLKEIIT…TTKRALQLLQ (71 aa). The tract at residues 256-334 is head domain (RuvB-H); it reads QHGLDYIDHK…HFNTTNEKRE (79 aa). 3 residues coordinate DNA: R292, R311, and R316.

The protein belongs to the RuvB family. In terms of assembly, homohexamer. Forms an RuvA(8)-RuvB(12)-Holliday junction (HJ) complex. HJ DNA is sandwiched between 2 RuvA tetramers; dsDNA enters through RuvA and exits via RuvB. An RuvB hexamer assembles on each DNA strand where it exits the tetramer. Each RuvB hexamer is contacted by two RuvA subunits (via domain III) on 2 adjacent RuvB subunits; this complex drives branch migration. In the full resolvosome a probable DNA-RuvA(4)-RuvB(12)-RuvC(2) complex forms which resolves the HJ.

Its subcellular location is the cytoplasm. It catalyses the reaction ATP + H2O = ADP + phosphate + H(+). Its function is as follows. The RuvA-RuvB-RuvC complex processes Holliday junction (HJ) DNA during genetic recombination and DNA repair, while the RuvA-RuvB complex plays an important role in the rescue of blocked DNA replication forks via replication fork reversal (RFR). RuvA specifically binds to HJ cruciform DNA, conferring on it an open structure. The RuvB hexamer acts as an ATP-dependent pump, pulling dsDNA into and through the RuvAB complex. RuvB forms 2 homohexamers on either side of HJ DNA bound by 1 or 2 RuvA tetramers; 4 subunits per hexamer contact DNA at a time. Coordinated motions by a converter formed by DNA-disengaged RuvB subunits stimulates ATP hydrolysis and nucleotide exchange. Immobilization of the converter enables RuvB to convert the ATP-contained energy into a lever motion, pulling 2 nucleotides of DNA out of the RuvA tetramer per ATP hydrolyzed, thus driving DNA branch migration. The RuvB motors rotate together with the DNA substrate, which together with the progressing nucleotide cycle form the mechanistic basis for DNA recombination by continuous HJ branch migration. Branch migration allows RuvC to scan DNA until it finds its consensus sequence, where it cleaves and resolves cruciform DNA. The protein is Holliday junction branch migration complex subunit RuvB of Staphylococcus epidermidis (strain ATCC 35984 / DSM 28319 / BCRC 17069 / CCUG 31568 / BM 3577 / RP62A).